The following is a 179-amino-acid chain: Peptidyl-tRNA hydrolase (179 aa).

Residue tyrosine 15 coordinates tRNA. The Proton acceptor role is filled by histidine 20. TRNA contacts are provided by tyrosine 66, asparagine 68, and asparagine 114.

This sequence belongs to the PTH family. In terms of assembly, monomer.

The protein localises to the cytoplasm. It catalyses the reaction an N-acyl-L-alpha-aminoacyl-tRNA + H2O = an N-acyl-L-amino acid + a tRNA + H(+). In terms of biological role, hydrolyzes ribosome-free peptidyl-tRNAs (with 1 or more amino acids incorporated), which drop off the ribosome during protein synthesis, or as a result of ribosome stalling. Its function is as follows. Catalyzes the release of premature peptidyl moieties from peptidyl-tRNA molecules trapped in stalled 50S ribosomal subunits, and thus maintains levels of free tRNAs and 50S ribosomes. This Chlamydia trachomatis serovar L2b (strain UCH-1/proctitis) protein is Peptidyl-tRNA hydrolase.